Consider the following 756-residue polypeptide: Probable cleavage and polyadenylation specificity factor subunit 2 (756 aa).

Phosphothreonine is present on residues threonine 221 and threonine 226.

Belongs to the metallo-beta-lactamase superfamily. RNA-metabolizing metallo-beta-lactamase-like family. CPSF2/YSH1 subfamily. Component of the cleavage and polyadenylation specificity factor (CPSF) complex, composed of at least Clp, Cpsf73, Cpsf100 and Cpsf160. Interacts with Sym and Cpsf73 forming a core cleavage factor required for both polyadenylated and histone mRNA processing. Interacts with Slbp and Lsm11.

It is found in the nucleus. Functionally, component of the cleavage and polyadenylation specificity factor (CPSF) complex that plays a key role in pre-mRNA 3'-end formation, recognizing the AAUAAA signal sequence and interacting with poly(A) polymerase and other factors to bring about cleavage and poly(A) addition. Required for the cotranscriptional processing of 3'-ends of polyadenylated and histone pre-mRNA. This Drosophila melanogaster (Fruit fly) protein is Probable cleavage and polyadenylation specificity factor subunit 2 (Cpsf100).